The primary structure comprises 347 residues: Toluene-4-sulfonate monooxygenase system iron-sulfur subunit TsaM1 (347 aa).

A Rieske domain is found at 7-109 (WYVAAWDTEI…VVERNRLVWI (103 aa)). [2Fe-2S] cluster-binding residues include Cys-48, His-50, Cys-67, and His-70.

As to quaternary structure, homotetramer. Part of the p-toluenesulfonate methyl-monooxygenase complex TsaBM, comprising the reductase TsaB and the oxygenase TsaM. [2Fe-2S] cluster serves as cofactor.

The catalysed reaction is toluene-4-sulfonate + NADH + O2 + H(+) = 4-(hydroxymethyl)benzenesulfonate + NAD(+) + H2O. Involved in the toluene-4-sulfonate degradation pathway. Does not discriminate between the sulfonate and the carboxyl substituents and can also be involved in the p-toluenecarboxylate degradation pathway. Can use toluene-4-sulfonate, p-toluate, m-toluate and 4-ethylbenzoate as substrates, but not p-xylene, toluene and p-cresol. Also catalyzes the demethylation of 4-methoxybenzoate to 4-hydroxybenzoate. The chain is Toluene-4-sulfonate monooxygenase system iron-sulfur subunit TsaM1 (tsaM1) from Comamonas testosteroni (Pseudomonas testosteroni).